The chain runs to 139 residues: MGETVRFGISMDDQLLESFDRLIEQKGYANRSEAIRDLIRAAQVELDWEEGEKEGVGTVTLVYNHHVRDLSDKLTEQQHAHHDQIISALHVHLDAHNCLEVLVVRGKARDVRRIADELIGVKGVKHGKLVMTTTGEGLH.

His79, His90, His92, and Cys98 together coordinate Ni(2+).

The protein belongs to the transcriptional regulatory CopG/NikR family. The cofactor is Ni(2+).

Its function is as follows. Transcriptional regulator. The sequence is that of Putative nickel-responsive regulator from Geobacter sp. (strain M21).